A 374-amino-acid chain; its full sequence is Glutamate 5-kinase (374 aa).

Lys9 serves as a coordination point for ATP. Substrate-binding residues include Ser49, Asp136, and Asn148. ATP-binding positions include 168 to 169 (TD) and 210 to 216 (TGGMRSK). In terms of domain architecture, PUA spans 276 to 354 (SGTITVDSGA…EEARQYSYLH (79 aa)).

This sequence belongs to the glutamate 5-kinase family.

It localises to the cytoplasm. It carries out the reaction L-glutamate + ATP = L-glutamyl 5-phosphate + ADP. It participates in amino-acid biosynthesis; L-proline biosynthesis; L-glutamate 5-semialdehyde from L-glutamate: step 1/2. In terms of biological role, catalyzes the transfer of a phosphate group to glutamate to form L-glutamate 5-phosphate. The polypeptide is Glutamate 5-kinase (Geobacillus thermodenitrificans (strain NG80-2)).